The following is a 412-amino-acid chain: uncharacterized protein (412 aa).

H49 is a binding site for Zn(2+). Catalysis depends on E52, which acts as the Proton acceptor. Residues H53 and E129 each contribute to the Zn(2+) site.

This sequence belongs to the peptidase M16 family. The cofactor is Zn(2+).

This is an uncharacterized protein from Rickettsia typhi (strain ATCC VR-144 / Wilmington).